The sequence spans 178 residues: Large ribosomal subunit protein bL25 (178 aa).

The protein belongs to the bacterial ribosomal protein bL25 family. CTC subfamily. As to quaternary structure, part of the 50S ribosomal subunit; part of the 5S rRNA/L5/L18/L25 subcomplex. Contacts the 5S rRNA. Binds to the 5S rRNA independently of L5 and L18.

In terms of biological role, this is one of the proteins that binds to the 5S RNA in the ribosome where it forms part of the central protuberance. This is Large ribosomal subunit protein bL25 from Helicobacter pylori (strain J99 / ATCC 700824) (Campylobacter pylori J99).